We begin with the raw amino-acid sequence, 132 residues long: MNIALIAHDQKKELMVNFAIAYKHIFEKCNIYATGHTGQLIKEATGLNVNCLLPGPLGGDQQIGAMIAENKIDMVIFLRDPLTAQPHEPDILALLRVCDVHSIPLATNIATAEVLLKGMEQGLLEWREIEDK.

An MGS-like domain is found at M1–K132. Residues H8 and K12 each contribute to the substrate site. The Proton donor/acceptor role is filled by D60. Position 87 (H87) interacts with substrate.

Belongs to the methylglyoxal synthase family.

The catalysed reaction is dihydroxyacetone phosphate = methylglyoxal + phosphate. In terms of biological role, catalyzes the formation of methylglyoxal from dihydroxyacetone phosphate. This is Methylglyoxal synthase from Thermoanaerobacter pseudethanolicus (strain ATCC 33223 / 39E) (Clostridium thermohydrosulfuricum).